The following is a 512-amino-acid chain: ATP synthase subunit alpha, chloroplastic (512 aa).

Position 170–177 (170–177 (GDRQTGKT)) interacts with ATP.

Belongs to the ATPase alpha/beta chains family. As to quaternary structure, F-type ATPases have 2 components, CF(1) - the catalytic core - and CF(0) - the membrane proton channel. CF(1) has five subunits: alpha(3), beta(3), gamma(1), delta(1), epsilon(1). CF(0) has four main subunits: a, b, b' and c.

Its subcellular location is the plastid. The protein resides in the chloroplast thylakoid membrane. The catalysed reaction is ATP + H2O + 4 H(+)(in) = ADP + phosphate + 5 H(+)(out). Produces ATP from ADP in the presence of a proton gradient across the membrane. The alpha chain is a regulatory subunit. The polypeptide is ATP synthase subunit alpha, chloroplastic (Staurastrum punctulatum (Green alga)).